Reading from the N-terminus, the 900-residue chain is Probable beta-mannosidase (900 aa).

The first 21 residues, 1 to 21 (MRTSLVVCLFWLLFQLHTTHG), serve as a signal peptide directing secretion. N-linked (GlcNAc...) asparagine glycans are attached at residues Asn-38, Asn-42, and Asn-131. Catalysis depends on Glu-463, which acts as the Proton donor. 4 N-linked (GlcNAc...) asparagine glycosylation sites follow: Asn-477, Asn-576, Asn-661, and Asn-738.

This sequence belongs to the glycosyl hydrolase 2 family.

The protein resides in the lysosome. It catalyses the reaction Hydrolysis of terminal, non-reducing beta-D-mannose residues in beta-D-mannosides.. This chain is Probable beta-mannosidase, found in Caenorhabditis elegans.